The following is a 149-amino-acid chain: 3-hydroxyacyl-[acyl-carrier-protein] dehydratase FabZ (149 aa).

His-47 is a catalytic residue.

It belongs to the thioester dehydratase family. FabZ subfamily.

The protein localises to the cytoplasm. It catalyses the reaction a (3R)-hydroxyacyl-[ACP] = a (2E)-enoyl-[ACP] + H2O. Its function is as follows. Involved in unsaturated fatty acids biosynthesis. Catalyzes the dehydration of short chain beta-hydroxyacyl-ACPs and long chain saturated and unsaturated beta-hydroxyacyl-ACPs. The sequence is that of 3-hydroxyacyl-[acyl-carrier-protein] dehydratase FabZ from Thioalkalivibrio sulfidiphilus (strain HL-EbGR7).